We begin with the raw amino-acid sequence, 365 residues long: Baculoviral IAP repeat-containing protein 7 (365 aa).

2 BIR repeats span residues 7 to 73 (RQRS…PFLQ) and 115 to 180 (RLGS…DFLL). Zn(2+) is bound by residues Cys149, Cys152, His169, and Cys176. The tract at residues 186–234 (AFIRSVQESFFSSPETSPESVGSYEGSPVSSPGSPPVCPFLSTSVAQGA) is self-inhibits the anti-apoptotic function. Ser198 is modified (phosphoserine). Ser202 is subject to Phosphoserine; by MAPK1. A Phosphoserine modification is found at Ser212. Ser216 and Ser219 each carry phosphoserine; by MAPK1. The interval 278 to 306 (TESVSVPRAPTQRERPEPPKEPAPPLSTE) is disordered. Positions 288-297 (TQRERPEPPK) are enriched in basic and acidic residues. An RING-type zinc finger spans residues 318–353 (CKVCMDNDVSMVFVPCGHLVVCTECAPNLRHCPICR).

The protein belongs to the IAP family. Post-translationally, auto-ubiquitinated, and degraded in a 2-step mechanism; a caspase-independent first step and a caspase-dependent second step. Phosphorylated via MAPK-dependent and CDK-dependent pathways during oocyte maturation. Phosphorylation does not appear to affect caspase inhibition or autoubiquitination activity.

Its subcellular location is the cytoplasm. The enzyme catalyses S-ubiquitinyl-[E2 ubiquitin-conjugating enzyme]-L-cysteine + [acceptor protein]-L-lysine = [E2 ubiquitin-conjugating enzyme]-L-cysteine + N(6)-ubiquitinyl-[acceptor protein]-L-lysine.. Its function is as follows. Weak apoptotic suppressor. Has E3 ubiquitin-protein ligase activity. Weak inhibitor of caspase activity. The chain is Baculoviral IAP repeat-containing protein 7 (birc7) from Xenopus tropicalis (Western clawed frog).